We begin with the raw amino-acid sequence, 96 residues long: Putative membrane protein insertion efficiency factor (96 aa).

The disordered stretch occupies residues 68-96 (DPVPEHFPARHPRPQGSPPTDHPPTDQPS). A compositionally biased stretch (pro residues) spans 82 to 96 (QGSPPTDHPPTDQPS).

The protein belongs to the UPF0161 family.

It is found in the cell membrane. Could be involved in insertion of integral membrane proteins into the membrane. This Deinococcus radiodurans (strain ATCC 13939 / DSM 20539 / JCM 16871 / CCUG 27074 / LMG 4051 / NBRC 15346 / NCIMB 9279 / VKM B-1422 / R1) protein is Putative membrane protein insertion efficiency factor.